Reading from the N-terminus, the 421-residue chain is G/T mismatch-specific thymine DNA glycosylase (421 aa).

Residues 45-108 (PNMATVTEQQ…STKSKEKQEK (64 aa)) are disordered. Positions 77 to 89 (RAAEPQEPVEPKK) are enriched in basic and acidic residues. The segment covering 91–100 (ATSKKSGKST) has biased composition (basic residues). Residues K114 and K259 each participate in a glycyl lysine isopeptide (Lys-Gly) (interchain with G-Cter in SUMO2) cross-link. K341 participates in a covalent cross-link: Glycyl lysine isopeptide (Lys-Gly) (interchain with G-Cter in SUMO); alternate. A Glycyl lysine isopeptide (Lys-Gly) (interchain with G-Cter in SUMO2); alternate cross-link involves residue K341.

Belongs to the uracil-DNA glycosylase (UDG) superfamily. TDG/mug family. In terms of assembly, homodimer. Interacts with AICDA and GADD45A. In terms of processing, sumoylation on Lys-341 by either SUMO1 or SUMO2 induces dissociation of the product DNA.

The protein resides in the nucleus. It carries out the reaction Hydrolyzes mismatched double-stranded DNA and polynucleotides, releasing free thymine.. In terms of biological role, DNA glycosylase that plays a key role in active DNA demethylation: specifically recognizes and binds 5-formylcytosine (5fC) and 5-carboxylcytosine (5caC) in the context of CpG sites and mediates their excision through base-excision repair (BER) to install an unmethylated cytosine. Cannot remove 5-hydroxymethylcytosine (5hmC). According to an alternative model, involved in DNA demethylation by mediating DNA glycolase activity toward 5-hydroxymethyluracil (5hmU) produced by deamination of 5hmC. Also involved in DNA repair by acting as a thymine-DNA glycosylase that mediates correction of G/T mispairs to G/C pairs: in the DNA of higher eukaryotes, hydrolytic deamination of 5-methylcytosine to thymine leads to the formation of G/T mismatches. Its role in the repair of canonical base damage is however minor compared to its role in DNA demethylation. It is capable of hydrolyzing the carbon-nitrogen bond between the sugar-phosphate backbone of the DNA and a mispaired thymine. In addition to the G/T, it can remove thymine also from C/T and T/T mispairs in the order G/T &gt;&gt; C/T &gt; T/T. It has no detectable activity on apyrimidinic sites and does not catalyze the removal of thymine from A/T pairs or from single-stranded DNA. It can also remove uracil and 5-bromouracil from mispairs with guanine. This is G/T mismatch-specific thymine DNA glycosylase (Tdg) from Mus musculus (Mouse).